Here is a 295-residue protein sequence, read N- to C-terminus: Enolase-phosphatase E1 (295 aa).

The Mg(2+) site is built by D20 and E22. Substrate-binding positions include 153–154 (SS) and K187. D212 is a Mg(2+) binding site. The interval 260–295 (ETKEENGGATNGKRKIEETNDDVAEEDKAQVYPNKK) is disordered.

Belongs to the HAD-like hydrolase superfamily. MasA/MtnC family. As to quaternary structure, monomer. Requires Mg(2+) as cofactor.

The protein localises to the cytoplasm. Its subcellular location is the nucleus. The enzyme catalyses 5-methylsulfanyl-2,3-dioxopentyl phosphate + H2O = 1,2-dihydroxy-5-(methylsulfanyl)pent-1-en-3-one + phosphate. It participates in amino-acid biosynthesis; L-methionine biosynthesis via salvage pathway; L-methionine from S-methyl-5-thio-alpha-D-ribose 1-phosphate: step 3/6. It functions in the pathway amino-acid biosynthesis; L-methionine biosynthesis via salvage pathway; L-methionine from S-methyl-5-thio-alpha-D-ribose 1-phosphate: step 4/6. Functionally, bifunctional enzyme that catalyzes the enolization of 2,3-diketo-5-methylthiopentyl-1-phosphate (DK-MTP-1-P) into the intermediate 2-hydroxy-3-keto-5-methylthiopentenyl-1-phosphate (HK-MTPenyl-1-P), which is then dephosphorylated to form the acireductone 1,2-dihydroxy-3-keto-5-methylthiopentene (DHK-MTPene). The chain is Enolase-phosphatase E1 from Anopheles gambiae (African malaria mosquito).